Consider the following 198-residue polypeptide: Basic helix-loop-helix transcription factor amos (198 aa).

The interval 76 to 131 is disordered; that stretch reads EQQQHHLQANPLGKNQGRSPRYWNKQQRSKPYDKLSTSMSSSTSSASSSSSSSAGF. Residues 111–129 show a composition bias toward low complexity; the sequence is STSMSSSTSSASSSSSSSA. The region spanning 138-190 is the bHLH domain; sequence KRRLAANARERRRMNSLNDAFDKLRDVVPSLGHDRRLSKYETLQMAQAYIGDL.

Efficient DNA binding requires dimerization with another bHLH protein. Interacts with Daughterless (da). During embryonic development, expression is seen in a small cluster of ectodermal cells during stage 10 which becomes restricted to 1 cell by stage 11. Expression is lost from this cell in the thorax and then the abdomen. Later expression is restricted to sensory organ precursors. Very transient expression was detected in distal leg disks at approximately 0-4 hours after puparium formation (APF), correlating with the anlage of the innervated tarsal claw.

The protein resides in the nucleus. Functionally, transcription factor involved in early neurogenesis; sensillum basiconica formation and maybe sensillum trichodea development. Promotes multiple dendritic (MD) neuron formation. Required for olfactory sensilla; regulated by lozenge (lz). This Drosophila melanogaster (Fruit fly) protein is Basic helix-loop-helix transcription factor amos (amos).